A 170-amino-acid chain; its full sequence is Small ribosomal subunit protein uS15 (170 aa).

Positions 1–10 (MARMHSRKKG) are enriched in basic residues. Residues 1–20 (MARMHSRKKGSSGSRPPVVD) are disordered.

Belongs to the universal ribosomal protein uS15 family. In terms of assembly, part of the 30S ribosomal subunit.

The polypeptide is Small ribosomal subunit protein uS15 (Methanothrix thermoacetophila (strain DSM 6194 / JCM 14653 / NBRC 101360 / PT) (Methanosaeta thermophila)).